The following is a 263-amino-acid chain: Flagellar L-ring protein (263 aa).

Residues 1-15 form the signal peptide; it reads MKRLLCLLLLTTLTG. C16 is lipidated: N-palmitoyl cysteine. C16 is lipidated: S-diacylglycerol cysteine. A disordered region spans residues 123–143; it reads KSADAELSKSNDSSMDPLQVG.

It belongs to the FlgH family. In terms of assembly, the basal body constitutes a major portion of the flagellar organelle and consists of four rings (L,P,S, and M) mounted on a central rod.

The protein resides in the cell outer membrane. Its subcellular location is the bacterial flagellum basal body. Assembles around the rod to form the L-ring and probably protects the motor/basal body from shearing forces during rotation. This Aliivibrio fischeri (strain ATCC 700601 / ES114) (Vibrio fischeri) protein is Flagellar L-ring protein.